A 362-amino-acid chain; its full sequence is Flagellar P-ring protein (362 aa).

An N-terminal signal peptide occupies residues 1-18; the sequence is MKHIALIVLYFLSFSVQA.

Belongs to the FlgI family. The basal body constitutes a major portion of the flagellar organelle and consists of four rings (L,P,S, and M) mounted on a central rod.

It localises to the periplasm. The protein localises to the bacterial flagellum basal body. Functionally, assembles around the rod to form the L-ring and probably protects the motor/basal body from shearing forces during rotation. This chain is Flagellar P-ring protein, found in Marinomonas sp. (strain MWYL1).